The primary structure comprises 190 residues: dCTP deaminase, dUMP-forming (190 aa).

DCTP contacts are provided by residues 101–106 (KSSLGR), aspartate 119, 127–129 (TLE), glutamine 148, tyrosine 162, and glutamine 174. The active-site Proton donor/acceptor is glutamate 129. The disordered stretch occupies residues 163–190 (GSTRVGSKYQGQRGPTPSRSYQNFITST). The span at 171-190 (YQGQRGPTPSRSYQNFITST) shows a compositional bias: polar residues.

It belongs to the dCTP deaminase family. Homotrimer.

The enzyme catalyses dCTP + 2 H2O = dUMP + NH4(+) + diphosphate. The protein operates within pyrimidine metabolism; dUMP biosynthesis; dUMP from dCTP: step 1/1. In terms of biological role, bifunctional enzyme that catalyzes both the deamination of dCTP to dUTP and the hydrolysis of dUTP to dUMP without releasing the toxic dUTP intermediate. In Mycolicibacterium paratuberculosis (strain ATCC BAA-968 / K-10) (Mycobacterium paratuberculosis), this protein is dCTP deaminase, dUMP-forming.